Consider the following 597-residue polypeptide: Siderophore iron transporter 2 (597 aa).

A Phosphoserine modification is found at Ser46. A run of 14 helical transmembrane segments spans residues 65-85 (IIVA…EQQT), 97-117 (FSAH…LAVV), 131-151 (SESL…LAFS), 159-179 (VAYI…QLII), 190-210 (ILSA…PVLA), 225-245 (YGIW…SLFL), 281-301 (LDGL…LPFS), 312-332 (TILT…LCFY), 357-377 (VLIF…TSFL), 390-410 (LTLN…GFLM), 419-439 (LLMI…LFGI), 448-468 (LVLV…SAQI), 485-505 (LYLT…GGVW), and 558-578 (KDLF…LVII).

This sequence belongs to the major facilitator superfamily.

It localises to the membrane. Functionally, involved in the transport of siderophore iron and so has a role in iron homeostasis. This is Siderophore iron transporter 2 (str2) from Schizosaccharomyces pombe (strain 972 / ATCC 24843) (Fission yeast).